A 122-amino-acid chain; its full sequence is Basic phospholipase A2 vipoxin B chain (122 aa).

Intrachain disulfides connect Cys-26/Cys-115, Cys-28/Cys-44, Cys-43/Cys-95, Cys-49/Cys-122, Cys-50/Cys-88, Cys-57/Cys-81, and Cys-75/Cys-86. Residues Tyr-27, Gly-29, and Gly-31 each coordinate Ca(2+). His-47 is an active-site residue. Asp-48 is a binding site for Ca(2+). Asp-89 is a catalytic residue.

Belongs to the phospholipase A2 family. Group II subfamily. D49 sub-subfamily. In terms of assembly, heterodimer of A (AC P04084) and B chains; non-covalently linked. The A chain (acidic) is non-toxic, and increases the toxicity of the B chain (basic). The A chain may act as factor stabilizing the complex structure and hence retaining its toxicity by preventing non-specific binding. Upon binding to the target membranes the A chain is postulated to dissociate. Ca(2+) serves as cofactor. Expressed by the venom gland.

It is found in the secreted. The catalysed reaction is a 1,2-diacyl-sn-glycero-3-phosphocholine + H2O = a 1-acyl-sn-glycero-3-phosphocholine + a fatty acid + H(+). In terms of biological role, heterodimer: postsynaptic neurotoxin. Its function is as follows. Monomer: snake venom phospholipase A2 (PLA2) that shows hemolytic activity and inhibition of platelet aggregation. The hemolytic activity occurs only in presence of fatty acids (unsaturated fatty acids facilitate induce a strong hemolytic activity, whereas saturated fatty acids induce a slight activity). The inhibition of platelet aggregation is almost maximal when aggregation is induced by collagen, and arachidonic acid, whereas it is only of 30% when the aggregation is induced by ADP. PLA2 catalyzes the calcium-dependent hydrolysis of the 2-acyl groups in 3-sn-phosphoglycerides. The protein is Basic phospholipase A2 vipoxin B chain of Vipera ammodytes meridionalis (Eastern sand viper).